Here is a 368-residue protein sequence, read N- to C-terminus: tRNA-specific 2-thiouridylase MnmA (368 aa).

ATP is bound by residues 11-18 and Met37; that span reads GMSGGVDS. The interval 97–99 is interaction with target base in tRNA; sequence NPD. Cys102 serves as the catalytic Nucleophile. Cys102 and Cys199 are disulfide-bonded. Gly127 lines the ATP pocket. The interval 149-151 is interaction with tRNA; the sequence is KDQ. Cys199 serves as the catalytic Cysteine persulfide intermediate. Residues 311 to 312 are interaction with tRNA; sequence RY.

This sequence belongs to the MnmA/TRMU family. In terms of assembly, interacts with TusE.

It is found in the cytoplasm. The enzyme catalyses S-sulfanyl-L-cysteinyl-[protein] + uridine(34) in tRNA + AH2 + ATP = 2-thiouridine(34) in tRNA + L-cysteinyl-[protein] + A + AMP + diphosphate + H(+). Its function is as follows. Catalyzes the 2-thiolation of uridine at the wobble position (U34) of tRNA(Lys), tRNA(Glu) and tRNA(Gln), leading to the formation of s(2)U34, the first step of tRNA-mnm(5)s(2)U34 synthesis. Sulfur is provided by IscS, via a sulfur-relay system. Binds ATP and its substrate tRNAs. This is tRNA-specific 2-thiouridylase MnmA from Citrobacter koseri (strain ATCC BAA-895 / CDC 4225-83 / SGSC4696).